The following is a 335-amino-acid chain: Galactosylgalactosylxylosylprotein 3-beta-glucuronosyltransferase 1 (335 aa).

Residues 1 to 6 (MPKRRD) lie on the Cytoplasmic side of the membrane. An essential for transport from endoplasmic reticulum to Golgi apparatus and interaction with SAR1A region spans residues 3–5 (KRR). Residues 7 to 27 (ILAIVLIVLPWTLLVTVWHQS) traverse the membrane as a helical; Signal-anchor for type II membrane protein segment. Over 28–335 (TIAPLLTTHK…KGFTDPTVEI (308 aa)) the chain is Lumenal. Position 92-94 (92-94 (PTY)) interacts with UDP-alpha-D-glucuronate. 2 positions are modified to phosphothreonine: Thr104 and Thr109. UDP-alpha-D-glucuronate is bound at residue Asp123. The N-linked (GlcNAc...) asparagine glycan is linked to Asn141. UDP-alpha-D-glucuronate is bound by residues Arg166 and Arg171. N-linked (GlcNAc...) asparagine glycosylation occurs at Asn185. A UDP-alpha-D-glucuronate-binding site is contributed by 196–198 (DDD). Position 198 (Asp198) interacts with Mn(2+). The segment at 246–255 (FDPHRPFAID) is interaction with galactose moiety of substrate glycoprotein. Glu285 acts as the Proton donor/acceptor in catalysis. Residue Asn304 is glycosylated (N-linked (GlcNAc...) asparagine). Residue 312 to 314 (HTR) coordinates UDP-alpha-D-glucuronate.

This sequence belongs to the glycosyltransferase 43 family. In terms of assembly, homodimer. Interacts with SAR1A. Mn(2+) is required as a cofactor. Post-translationally, the soluble form derives from the membrane form by proteolytic processing.

The protein localises to the golgi apparatus membrane. The protein resides in the secreted. The catalysed reaction is 3-O-(beta-D-galactosyl-(1-&gt;3)-beta-D-galactosyl-(1-&gt;4)-beta-D-xylosyl)-L-seryl-[protein] + UDP-alpha-D-glucuronate = 3-O-(beta-D-GlcA-(1-&gt;3)-beta-D-Gal-(1-&gt;3)-beta-D-Gal-(1-&gt;4)-beta-D-Xyl)-L-seryl-[protein] + UDP + H(+). Its pathway is protein modification; protein glycosylation. Functionally, involved in the biosynthesis of L2/HNK-1 carbohydrate epitope on glycoproteins. Can also play a role in glycosaminoglycan biosynthesis. Substrates include asialo-orosomucoid (ASOR), asialo-fetuin, and asialo-neural cell adhesion molecule. Requires sphingomyelin for activity: stearoyl-sphingomyelin was the most effective, followed by palmitoyl-sphingomyelin and lignoceroyl-sphingomyelin. Activity was demonstrated only for sphingomyelin with a saturated fatty acid and not for that with an unsaturated fatty acid, regardless of the length of the acyl group. This Canis lupus familiaris (Dog) protein is Galactosylgalactosylxylosylprotein 3-beta-glucuronosyltransferase 1.